The primary structure comprises 63 residues: Sec-independent protein translocase protein TatA (63 aa).

The chain crosses the membrane as a helical span at residues 1–21 (MGGLSVGSVVLIALVALLIFG).

It belongs to the TatA/E family. As to quaternary structure, forms a complex with TatC.

The protein resides in the cell membrane. Functionally, part of the twin-arginine translocation (Tat) system that transports large folded proteins containing a characteristic twin-arginine motif in their signal peptide across membranes. TatA could form the protein-conducting channel of the Tat system. In Shouchella clausii (strain KSM-K16) (Alkalihalobacillus clausii), this protein is Sec-independent protein translocase protein TatA.